A 403-amino-acid polypeptide reads, in one-letter code: Double C2-like domain-containing protein alpha (403 aa).

An interaction with UNC13D and DYNLT1 region spans residues 1-92; sequence MRGRRGDRMT…DSYDSDDTTA (92 aa). C2 domains follow at residues 92–214 and 254–387; these read ALGT…HFNI and ERGR…ERWH. The Ca(2+) site is built by aspartate 123, aspartate 129, aspartate 184, aspartate 186, aspartate 285, aspartate 291, aspartate 345, aspartate 347, and aspartate 353. Residues 218–403 form an interaction with UNC13D region; that stretch reads RQVPLPSPSS…PPAAGALPLA (186 aa).

Interacts (via N-terminus) with UNC13A. Interacts with cytoplasmic dynein light chain DYNLT1. Interacts with UNC13D. Requires Ca(2+) as cofactor. Predominantly expressed in brain. Also found in non-neural tissues. Expressed in RBL-2H3 mast cell line.

It localises to the cytoplasmic vesicle. The protein localises to the secretory vesicle. The protein resides in the synaptic vesicle membrane. It is found in the synapse. Its subcellular location is the synaptosome. It localises to the lysosome. Its function is as follows. Calcium sensor which most probably regulates fusion of vesicles with membranes. Binds calcium and phospholipids. May be involved in calcium dependent neurotransmitter release through the interaction with UNC13A. May be involved in calcium-dependent spontaneous release of neurotransmitter in absence of action potentials in neuronal cells. Regulates Ca(2+)-dependent secretory lysosome exocytosis in mast cells. The protein is Double C2-like domain-containing protein alpha (Doc2a) of Rattus norvegicus (Rat).